Here is a 398-residue protein sequence, read N- to C-terminus: LIM/homeobox protein Lhx3 (398 aa).

2 consecutive LIM zinc-binding domains span residues 28–78 (CAGC…CKDD) and 87–141 (CAAC…CKAD). A DNA-binding region (homeobox) is located at residues 154 to 213 (AKRPRTTITAKQLETLKNAYNNSPKPARHVREQLSTETGLDMRVVQVWFQNRRAKEKRLK). Disordered stretches follow at residues 208-294 (KEKR…FPLE) and 307-398 (DIQA…HAQF). Low complexity predominate over residues 272–282 (SSLSESSPALS).

Its subcellular location is the nucleus. Transcription factor. This chain is LIM/homeobox protein Lhx3 (lhx3), found in Danio rerio (Zebrafish).